The following is a 379-amino-acid chain: Flap endonuclease 1 (379 aa).

The tract at residues 1–105 is N-domain; sequence MGIKGLTKLL…QELAKRYSKR (105 aa). Aspartate 34 is a Mg(2+) binding site. Arginine 71 contributes to the DNA binding site. Mg(2+) contacts are provided by aspartate 87, glutamate 159, glutamate 161, aspartate 180, and aspartate 182. Residues 123 to 254 form an I-domain region; that stretch reads AIEKLSKRTV…QTALKLIRQH (132 aa). A DNA-binding site is contributed by glutamate 159. The DNA site is built by glycine 232 and aspartate 234. Aspartate 234 provides a ligand contact to Mg(2+). The segment at 331–379 is disordered; that stretch reads AKNKSSQGRLESFFKPTATTSAPLKRKETSDKTSKAAANKKTKAGGKKK. Residues 336–344 are interaction with PCNA; sequence SQGRLESFF. The span at 355-364 shows a compositional bias: basic and acidic residues; the sequence is KRKETSDKTS. The span at 368-379 shows a compositional bias: basic residues; the sequence is ANKKTKAGGKKK.

This sequence belongs to the XPG/RAD2 endonuclease family. FEN1 subfamily. Interacts with PCNA. Three molecules of FEN1 bind to one PCNA trimer with each molecule binding to one PCNA monomer. PCNA stimulates the nuclease activity without altering cleavage specificity. It depends on Mg(2+) as a cofactor. Post-translationally, phosphorylated. Phosphorylation upon DNA damage induces relocalization to the nuclear plasma.

The protein localises to the nucleus. Its subcellular location is the nucleolus. It is found in the nucleoplasm. The protein resides in the mitochondrion. Its function is as follows. Structure-specific nuclease with 5'-flap endonuclease and 5'-3' exonuclease activities involved in DNA replication and repair. During DNA replication, cleaves the 5'-overhanging flap structure that is generated by displacement synthesis when DNA polymerase encounters the 5'-end of a downstream Okazaki fragment. It enters the flap from the 5'-end and then tracks to cleave the flap base, leaving a nick for ligation. Also involved in the long patch base excision repair (LP-BER) pathway, by cleaving within the apurinic/apyrimidinic (AP) site-terminated flap. Acts as a genome stabilization factor that prevents flaps from equilibrating into structures that lead to duplications and deletions. Also possesses 5'-3' exonuclease activity on nicked or gapped double-stranded DNA, and exhibits RNase H activity. Also involved in replication and repair of rDNA and in repairing mitochondrial DNA. In Zea mays (Maize), this protein is Flap endonuclease 1.